Reading from the N-terminus, the 276-residue chain is Protein canopy homolog 3 (276 aa).

Positions 1–16 are cleaved as a signal peptide; the sequence is MNVFISVVLFLGSARA. Residues 30 to 269 form the Saposin B-type domain; sequence NKCEVCKFVS…EEEIQKKVPL (240 aa). 3 disulfides stabilise this stretch: cysteine 32/cysteine 190, cysteine 35/cysteine 178, and cysteine 88/cysteine 150. The stretch at 137–162 forms a coiled coil; that stretch reads NETSAEVADLKKQCDVMVEQYEDVIE. Positions 206–276 are disordered; it reads AEDKKKKKGK…VPLNQPKTEL (71 aa). 2 stretches are compositionally biased toward basic residues: residues 210–219 and 228–239; these read KKKKGKKKKG and KEKKVKKKKKKS. Residues 240–252 are compositionally biased toward basic and acidic residues; it reads KISDSESSKRRME.

It belongs to the canopy family.

It localises to the endoplasmic reticulum. Functionally, toll-like receptor (TLR)-specific co-chaperone for HSP90B1. Required for proper TLR folding and hence controls TLR exit from the endoplasmic reticulum. Consequently, required for immune responses. The sequence is that of Protein canopy homolog 3 (cnpy3) from Danio rerio (Zebrafish).